Consider the following 187-residue polypeptide: uncharacterized protein (187 aa).

The 135-residue stretch at arginine 53–glycine 187 folds into the Tyr recombinase domain. Residues arginine 98 and lysine 123 contribute to the active site.

The protein belongs to the 'phage' integrase family.

This is an uncharacterized protein from Sinorhizobium fredii (strain NBRC 101917 / NGR234).